The chain runs to 188 residues: Protein GrpE (188 aa).

Basic and acidic residues predominate over residues 1-16 (MEERNEQVVEEVKEAQ). A disordered region spans residues 1 to 31 (MEERNEQVVEEVKEAQVEEAVTPENSEETVE).

It belongs to the GrpE family. In terms of assembly, homodimer.

Its subcellular location is the cytoplasm. Participates actively in the response to hyperosmotic and heat shock by preventing the aggregation of stress-denatured proteins, in association with DnaK and GrpE. It is the nucleotide exchange factor for DnaK and may function as a thermosensor. Unfolded proteins bind initially to DnaJ; upon interaction with the DnaJ-bound protein, DnaK hydrolyzes its bound ATP, resulting in the formation of a stable complex. GrpE releases ADP from DnaK; ATP binding to DnaK triggers the release of the substrate protein, thus completing the reaction cycle. Several rounds of ATP-dependent interactions between DnaJ, DnaK and GrpE are required for fully efficient folding. This Bacillus anthracis protein is Protein GrpE.